We begin with the raw amino-acid sequence, 196 residues long: Peptidyl-tRNA hydrolase (196 aa).

TRNA is bound at residue Tyr-18. The active-site Proton acceptor is His-23. TRNA contacts are provided by Phe-69, Asn-71, and Asn-117.

This sequence belongs to the PTH family. Monomer.

It localises to the cytoplasm. It catalyses the reaction an N-acyl-L-alpha-aminoacyl-tRNA + H2O = an N-acyl-L-amino acid + a tRNA + H(+). Hydrolyzes ribosome-free peptidyl-tRNAs (with 1 or more amino acids incorporated), which drop off the ribosome during protein synthesis, or as a result of ribosome stalling. Functionally, catalyzes the release of premature peptidyl moieties from peptidyl-tRNA molecules trapped in stalled 50S ribosomal subunits, and thus maintains levels of free tRNAs and 50S ribosomes. This is Peptidyl-tRNA hydrolase from Vibrio vulnificus (strain CMCP6).